A 527-amino-acid polypeptide reads, in one-letter code: Glucose-6-phosphate isomerase (527 aa).

Glutamate 323 functions as the Proton donor in the catalytic mechanism. Residues histidine 352 and lysine 454 contribute to the active site.

Belongs to the GPI family.

It localises to the cytoplasm. It carries out the reaction alpha-D-glucose 6-phosphate = beta-D-fructose 6-phosphate. It participates in carbohydrate biosynthesis; gluconeogenesis. The protein operates within carbohydrate degradation; glycolysis; D-glyceraldehyde 3-phosphate and glycerone phosphate from D-glucose: step 2/4. Catalyzes the reversible isomerization of glucose-6-phosphate to fructose-6-phosphate. In Prochlorococcus marinus (strain MIT 9312), this protein is Glucose-6-phosphate isomerase.